A 477-amino-acid polypeptide reads, in one-letter code: MVDTEMPFWSNLNFGMNSMDMSALEDHCQPYDIKPFTTVDFSSINSHYDDILDEKTFLCRNDQSPIDYKYDLKLQECQSSIKLEPPSPPYFSDKPQCSKAFEDTPNSFIAIECRVCGDKASGFHYGVHACEGCKGFFRRTIRLKLIYERCDLNCRIHKKSRNKCQFCRFQKCLAVGMSHNAIRFGRMPQAEKEKLLAEISSDIDQLNPESADQRVLAKHLYDSYVKSFPLTKAKAPGHPDGQSHRQNSRGYTRHELADDGGGSDQGAVREPRAEQGGGDSNLPALSVALRGGVREITEFAKNIPGFVSLDLNDQVTLLKYGVHEIIFTMLASLMNKDGVLVAEGQGFMTREFLKSLRKPFSDFMEPKFEFAIRFNSLELDDSDLAIFVAVIILSGDRPGLLNVKPIEDIQDSLLQALELQLKLNHPDSAQLFAKLLQKMTDLRQVVTEHVQLLQLIKKTEADMCLHPLLQEIYKDLY.

The residue at position 87 (Ser87) is a Phosphoserine; by MAPK. The segment at residues 110–184 (AIECRVCGDK…VGMSHNAIRF (75 aa)) is a DNA-binding region (nuclear receptor). 2 consecutive NR C4-type zinc fingers follow at residues 113 to 133 (CRVC…CEGC) and 150 to 172 (CDLN…FQKC). Positions 231-281 (TKAKAPGHPDGQSHRQNSRGYTRHELADDGGGSDQGAVREPRAEQGGGDSN) are disordered. Positions 252–475 (TRHELADDGG…HPLLQEIYKD (224 aa)) constitute an NR LBD domain. The short motif at 467 to 475 (PLLQEIYKD) is the 9aaTAD element.

Belongs to the nuclear hormone receptor family. NR1 subfamily. Heterodimer with the retinoid X receptor. As to expression, expressed mainly in adipose tissue and kidney.

It localises to the nucleus. The protein localises to the cytoplasm. Receptor that binds peroxisome proliferators such as hypolipidemic drugs and fatty acids. Once activated by a ligand, the receptor binds to a promoter element in the gene for acyl-CoA oxidase and activates its transcription. It therefore controls the peroxisomal beta-oxidation pathway of fatty acids. Key regulator of adipocyte differentiation and glucose homeostasis. May play a role in the regulation of circadian rhythm. The chain is Peroxisome proliferator-activated receptor gamma (pparg) from Xenopus laevis (African clawed frog).